The primary structure comprises 193 residues: 3-isopropylmalate dehydratase small subunit (193 aa).

It belongs to the LeuD family. LeuD type 1 subfamily. In terms of assembly, heterodimer of LeuC and LeuD.

It catalyses the reaction (2R,3S)-3-isopropylmalate = (2S)-2-isopropylmalate. Its pathway is amino-acid biosynthesis; L-leucine biosynthesis; L-leucine from 3-methyl-2-oxobutanoate: step 2/4. Its function is as follows. Catalyzes the isomerization between 2-isopropylmalate and 3-isopropylmalate, via the formation of 2-isopropylmaleate. The sequence is that of 3-isopropylmalate dehydratase small subunit from Listeria monocytogenes serotype 4b (strain CLIP80459).